Here is a 435-residue protein sequence, read N- to C-terminus: T-box transcription factor T (435 aa).

The segment at residues 51–219 is a DNA-binding region (T-box); sequence LWLRFKELTN…YNPFAKAFLD (169 aa). A disordered region spans residues 279–308; sequence YPTLRSHRSSPYPSPYAHRNNSPTYSDNSP. A compositionally biased stretch (polar residues) spans 297–308; the sequence is RNNSPTYSDNSP.

As to quaternary structure, monomer. In terms of tissue distribution, detected in testis, but not in other, normal tissues. Detected in lung tumors (at protein level).

The protein resides in the nucleus. Its function is as follows. Involved in the transcriptional regulation of genes required for mesoderm formation and differentiation. Binds to a palindromic T site 5'-TTCACACCTAGGTGTGAA-3' DNA sequence and activates gene transcription when bound to such a site. This Homo sapiens (Human) protein is T-box transcription factor T.